Consider the following 116-residue polypeptide: Helper of Tim protein 13 (116 aa).

The CHY-type; degenerate zinc-finger motif lies at 10–94 (TVDDQSRCVH…SNLICPNCRS (85 aa)). Zn(2+)-binding residues include Cys17, His19, Cys40, Cys43, Cys68, Cys71, Cys89, and Cys92.

Interacts with the small Tim proteins TIM8, TIM9, TIM10, TIM12, and TIM13.

Its subcellular location is the mitochondrion intermembrane space. The protein resides in the mitochondrion membrane. In terms of biological role, required for the assembly or recycling of the small Tim proteins in the mitochondrial intermembrane, thereby participating in the import and insertion of multi-pass transmembrane proteins into the mitochondrial inner membrane. Probably acts by facilitating the formation of disulfide bonds in small Tim proteins. In Saccharomyces cerevisiae (strain ATCC 204508 / S288c) (Baker's yeast), this protein is Helper of Tim protein 13 (HOT13).